The sequence spans 435 residues: U-box domain-containing protein 36 (435 aa).

The stretch at 227-345 (EAEASKRKAR…LKGKREEEEA (119 aa)) forms a coiled coil. One can recognise a U-box domain in the interval 352 to 426 (EPPQYFICPI…QEWLQLRELL (75 aa)).

It catalyses the reaction S-ubiquitinyl-[E2 ubiquitin-conjugating enzyme]-L-cysteine + [acceptor protein]-L-lysine = [E2 ubiquitin-conjugating enzyme]-L-cysteine + N(6)-ubiquitinyl-[acceptor protein]-L-lysine.. It participates in protein modification; protein ubiquitination. Its function is as follows. Functions as an E3 ubiquitin ligase. This Arabidopsis thaliana (Mouse-ear cress) protein is U-box domain-containing protein 36 (PUB36).